A 196-amino-acid chain; its full sequence is ATP-dependent Clp protease proteolytic subunit (196 aa).

The Nucleophile role is filled by Ser98. His123 is a catalytic residue.

Belongs to the peptidase S14 family. In terms of assembly, fourteen ClpP subunits assemble into 2 heptameric rings which stack back to back to give a disk-like structure with a central cavity, resembling the structure of eukaryotic proteasomes.

The protein localises to the cytoplasm. The catalysed reaction is Hydrolysis of proteins to small peptides in the presence of ATP and magnesium. alpha-casein is the usual test substrate. In the absence of ATP, only oligopeptides shorter than five residues are hydrolyzed (such as succinyl-Leu-Tyr-|-NHMec, and Leu-Tyr-Leu-|-Tyr-Trp, in which cleavage of the -Tyr-|-Leu- and -Tyr-|-Trp bonds also occurs).. Functionally, cleaves peptides in various proteins in a process that requires ATP hydrolysis. Has a chymotrypsin-like activity. Plays a major role in the degradation of misfolded proteins. This chain is ATP-dependent Clp protease proteolytic subunit, found in Anoxybacillus flavithermus (strain DSM 21510 / WK1).